Here is a 112-residue protein sequence, read N- to C-terminus: ATP synthase subunit c (112 aa).

A run of 2 helical transmembrane segments spans residues 36 to 56 (FSVL…AIGM) and 81 to 101 (MFIA…IALI).

Belongs to the ATPase C chain family. F-type ATPases have 2 components, F(1) - the catalytic core - and F(0) - the membrane proton channel. F(1) has five subunits: alpha(3), beta(3), gamma(1), delta(1), epsilon(1). F(0) has three main subunits: a(1), b(2) and c(10-14). The alpha and beta chains form an alternating ring which encloses part of the gamma chain. F(1) is attached to F(0) by a central stalk formed by the gamma and epsilon chains, while a peripheral stalk is formed by the delta and b chains.

The protein resides in the cell inner membrane. Functionally, f(1)F(0) ATP synthase produces ATP from ADP in the presence of a proton or sodium gradient. F-type ATPases consist of two structural domains, F(1) containing the extramembraneous catalytic core and F(0) containing the membrane proton channel, linked together by a central stalk and a peripheral stalk. During catalysis, ATP synthesis in the catalytic domain of F(1) is coupled via a rotary mechanism of the central stalk subunits to proton translocation. The sequence is that of ATP synthase subunit c from Campylobacter jejuni subsp. jejuni serotype O:2 (strain ATCC 700819 / NCTC 11168).